Here is a 207-residue protein sequence, read N- to C-terminus: Small ribosomal subunit protein uS4A (207 aa).

An S4 RNA-binding domain is found at 98-161; the sequence is RRLDNVVYRM…REHKRIKELA (64 aa).

This sequence belongs to the universal ribosomal protein uS4 family. In terms of assembly, part of the 30S ribosomal subunit. Contacts protein S5. The interaction surface between S4 and S5 is involved in control of translational fidelity.

In terms of biological role, one of the primary rRNA binding proteins, it binds directly to 16S rRNA where it nucleates assembly of the body of the 30S subunit. Its function is as follows. With S5 and S12 plays an important role in translational accuracy. The protein is Small ribosomal subunit protein uS4A of Symbiobacterium thermophilum (strain DSM 24528 / JCM 14929 / IAM 14863 / T).